Here is a 102-residue protein sequence, read N- to C-terminus: Integration host factor subunit alpha (102 aa).

This sequence belongs to the bacterial histone-like protein family. As to quaternary structure, heterodimer of an alpha and a beta chain.

In terms of biological role, this protein is one of the two subunits of integration host factor, a specific DNA-binding protein that functions in genetic recombination as well as in transcriptional and translational control. The protein is Integration host factor subunit alpha of Chromohalobacter salexigens (strain ATCC BAA-138 / DSM 3043 / CIP 106854 / NCIMB 13768 / 1H11).